Here is a 291-residue protein sequence, read N- to C-terminus: Taste receptor type 2 member 16 (291 aa).

Met-1 is a topological domain (extracellular). Residues Ile-2–Ile-22 form a helical membrane-spanning segment. Residues Val-23–Arg-41 lie on the Cytoplasmic side of the membrane. A helical membrane pass occupies residues Leu-42–Ala-62. Over Ser-63 to Thr-84 the chain is Extracellular. Residue Asn-80 is glycosylated (N-linked (GlcNAc...) asparagine). The chain crosses the membrane as a helical span at residues Trp-85–Ile-105. The Cytoplasmic portion of the chain corresponds to Lys-106 to Leu-125. The helical transmembrane segment at Phe-126–Ile-146 threads the bilayer. Residues Gly-147–Thr-182 are Extracellular-facing. Asn-163 carries an N-linked (GlcNAc...) asparagine glycan. The chain crosses the membrane as a helical span at residues Val-183 to Leu-203. At Thr-204 to Ser-228 the chain is on the cytoplasmic side. The helical transmembrane segment at Leu-229 to Gly-249 threads the bilayer. The Extracellular portion of the chain corresponds to Thr-250–Trp-257. A helical transmembrane segment spans residues Leu-258–Leu-278. Residues Ser-279–Cys-291 lie on the Cytoplasmic side of the membrane.

This sequence belongs to the G-protein coupled receptor T2R family. Interacts with RTP3 and RTP4.

It localises to the cell membrane. Receptor that may play a role in the perception of bitterness and is gustducin-linked. May play a role in sensing the chemical composition of the gastrointestinal content. The activity of this receptor may stimulate alpha gustducin, mediate PLC-beta-2 activation and lead to the gating of TRPM5. The protein is Taste receptor type 2 member 16 (TAS2R16) of Pan paniscus (Pygmy chimpanzee).